We begin with the raw amino-acid sequence, 353 residues long: Ubiquinol oxidase 2, mitochondrial (353 aa).

The N-terminal 21 residues, 1-21 (MSQLITKAALRVLLVCGRGNC), are a transit peptide targeting the mitochondrion. A helical membrane pass occupies residues 178–198 (AMMLETVAAVPGMVGGMLLHL). Residues Glu-182, Glu-221, and His-224 each contribute to the Fe cation site. The helical transmembrane segment at 240–260 (LLVMLVQGIFFNSFFVCYVIS) threads the bilayer. Fe cation contacts are provided by Glu-272, Glu-323, and His-326.

Belongs to the alternative oxidase family. As to quaternary structure, homodimer; disulfide-linked. It depends on Fe cation as a cofactor. Maximally expressed in dry seeds. Detected in roots, stems and leaves.

The protein localises to the mitochondrion inner membrane. It catalyses the reaction 2 a ubiquinol + O2 = 2 a ubiquinone + 2 H2O. Catalyzes the cyanide-resistant oxidation of ubiquinol and the reduction of molecular oxygen to water, but does not translocate protons and consequently is not linked to oxidative phosphorylation. May increase respiration when the cytochrome respiratory pathway is restricted, or in response to low temperatures. The polypeptide is Ubiquinol oxidase 2, mitochondrial (AOX2) (Arabidopsis thaliana (Mouse-ear cress)).